The primary structure comprises 144 residues: Large ribosomal subunit protein uL15 (144 aa).

Positions 1–53 are disordered; that stretch reads MRLNTLSPAEGAKHAPKRLGRGIGSGLGKTGGRGHKGQNSRSGGGVRRGFEGG. The segment covering 21–31 has biased composition (gly residues); the sequence is RGIGSGLGKTG.

It belongs to the universal ribosomal protein uL15 family. As to quaternary structure, part of the 50S ribosomal subunit.

Its function is as follows. Binds to the 23S rRNA. This is Large ribosomal subunit protein uL15 from Pectobacterium atrosepticum (strain SCRI 1043 / ATCC BAA-672) (Erwinia carotovora subsp. atroseptica).